A 1358-amino-acid polypeptide reads, in one-letter code: Phosphoinositide 3-kinase regulatory subunit 4 (1358 aa).

A lipid anchor (N-myristoyl glycine) is attached at Gly2. The 299-residue stretch at 26–324 folds into the Protein kinase domain; that stretch reads FEYDKSLGST…AFPEIFYTFL (299 aa). Residues 32 to 40 and Lys53 each bind ATP; that span reads LGSTRFFKV. Asp148 serves as the catalytic Proton acceptor. 4 HEAT repeats span residues 413-450, 458-495, 572-610, and 612-648; these read ILLD…LVQE, IYPE…TALR, KAND…YVGW, and SSSI…LGLL. 4 positions are modified to phosphoserine: Ser808, Ser813, Ser853, and Ser865. 6 WD repeats span residues 991-1030, 1040-1079, 1093-1134, 1139-1178, 1182-1223, and 1237-1278; these read EHKS…GKTT, RIGG…LPKS, KEDG…NAWT, LKSG…PISS, PSRA…RRLT, and PSPH…RSYV. A disordered region spans residues 1307-1326; the sequence is KQKVGPSDDTPRRGPESLPV. Residues 1315 to 1326 show a composition bias toward basic and acidic residues; that stretch reads DTPRRGPESLPV. The residue at position 1316 (Thr1316) is a Phosphothreonine. The WD 7 repeat unit spans residues 1327 to 1358; sequence GHHDIITDIATFQTTQGFIVTASRDGIVKVWK.

Belongs to the protein kinase superfamily. Ser/Thr protein kinase family. Component of the PI3K (PI3KC3/PI3K-III/class III phosphatidylinositol 3-kinase) complex the core of which is composed of the catalytic subunit PIK3C3, the regulatory subunit PIK3R4 and BECN1 associating with additional regulatory/auxiliary subunits to form alternative complex forms. Alternative complex forms containing a fourth regulatory subunit in a mutually exclusive manner are PI3K complex I (PI3KC3-C1) containing ATG14, and PI3K complex II (PI3KC3-C2) containing UVRAG. PI3KC3-C1 displays a V-shaped architecture with PIK3R4 serving as a bridge between PIK3C3 and the ATG14:BECN1 subcomplex. Both, PI3KC3-C1 and PI3KC3-C2, can associate with further regulatory subunits, such as RUBCN, SH3GLB1/Bif-1, AMBRA1 and NRBF2. PI3KC3-C1 probably associates with PIK3CB. Interacts with RAB7A in the presence of PIK3C3/VPS34. Interacts with NRBF2. Interacts with ARMC3. Mn(2+) is required as a cofactor. Post-translationally, myristoylated. In terms of processing, probably autophosphorylated.

The protein localises to the late endosome. It is found in the cytoplasmic vesicle. Its subcellular location is the autophagosome. The protein resides in the membrane. The enzyme catalyses L-seryl-[protein] + ATP = O-phospho-L-seryl-[protein] + ADP + H(+). The catalysed reaction is L-threonyl-[protein] + ATP = O-phospho-L-threonyl-[protein] + ADP + H(+). Its function is as follows. Regulatory subunit of the PI3K complex that mediates formation of phosphatidylinositol 3-phosphate; different complex forms are believed to play a role in multiple membrane trafficking pathways: PI3KC3-C1 is involved in initiation of autophagosomes and PI3KC3-C2 in maturation of autophagosomes and endocytosis. Involved in regulation of degradative endocytic trafficking and cytokinesis, probably in the context of PI3KC3-C2. The chain is Phosphoinositide 3-kinase regulatory subunit 4 (Pik3r4) from Mus musculus (Mouse).